We begin with the raw amino-acid sequence, 319 residues long: tRNA-cytidine(32) 2-sulfurtransferase (319 aa).

A PP-loop motif motif is present at residues 45-50 (SGGKDS). [4Fe-4S] cluster-binding residues include Cys-120, Cys-123, and Cys-211.

This sequence belongs to the TtcA family. As to quaternary structure, homodimer. The cofactor is Mg(2+). It depends on [4Fe-4S] cluster as a cofactor.

Its subcellular location is the cytoplasm. It carries out the reaction cytidine(32) in tRNA + S-sulfanyl-L-cysteinyl-[cysteine desulfurase] + AH2 + ATP = 2-thiocytidine(32) in tRNA + L-cysteinyl-[cysteine desulfurase] + A + AMP + diphosphate + H(+). The protein operates within tRNA modification. In terms of biological role, catalyzes the ATP-dependent 2-thiolation of cytidine in position 32 of tRNA, to form 2-thiocytidine (s(2)C32). The sulfur atoms are provided by the cysteine/cysteine desulfurase (IscS) system. The chain is tRNA-cytidine(32) 2-sulfurtransferase from Shewanella woodyi (strain ATCC 51908 / MS32).